The following is a 160-amino-acid chain: GTP-dependent dephospho-CoA kinase (160 aa).

GTP is bound by residues aspartate 45, isoleucine 46, valine 47, aspartate 59, lysine 61, glutamate 108, and aspartate 130.

This sequence belongs to the GTP-dependent DPCK family.

It carries out the reaction 3'-dephospho-CoA + GTP = GDP + CoA + H(+). Its pathway is cofactor biosynthesis; coenzyme A biosynthesis. Catalyzes the GTP-dependent phosphorylation of the 3'-hydroxyl group of dephosphocoenzyme A to form coenzyme A (CoA). The polypeptide is GTP-dependent dephospho-CoA kinase (Staphylothermus marinus (strain ATCC 43588 / DSM 3639 / JCM 9404 / F1)).